Consider the following 142-residue polypeptide: Large ribosomal subunit protein uL11 (142 aa).

The protein belongs to the universal ribosomal protein uL11 family. Part of the ribosomal stalk of the 50S ribosomal subunit. Interacts with L10 and the large rRNA to form the base of the stalk. L10 forms an elongated spine to which L12 dimers bind in a sequential fashion forming a multimeric L10(L12)X complex. In terms of processing, one or more lysine residues are methylated.

Functionally, forms part of the ribosomal stalk which helps the ribosome interact with GTP-bound translation factors. This Shewanella sp. (strain ANA-3) protein is Large ribosomal subunit protein uL11.